The chain runs to 116 residues: MVIVTNTSKITKGNGEKLIERFNKVGKVEFMEGFLGLEVLLTENTKDFDEVTVVTRWNTKDDFKNWTKSSAFRDAHSKREVPEYILENKISFYEVKVVRGPLTAAEAGNDSQAQAQ.

Residues valine 2 to phenylalanine 92 form the ABM domain. Fe cation is bound at residue asparagine 6. Histidine 76 contributes to the heme binding site.

It belongs to the antibiotic biosynthesis monooxygenase family. Heme-degrading monooxygenase IsdG subfamily. Homodimer.

The protein localises to the cytoplasm. It carries out the reaction heme b + 3 reduced [NADPH--hemoprotein reductase] + 3 O2 = biliverdin IXalpha + CO + Fe(2+) + 3 oxidized [NADPH--hemoprotein reductase] + 3 H2O + H(+). In terms of biological role, allows bacterial pathogens to use the host heme as an iron source. Catalyzes the oxidative degradation of the heme macrocyclic porphyrin ring to the biliverdin in the presence of a suitable electron donor such as ascorbate or NADPH--cytochrome P450 reductase, with subsequent release of free iron. The protein is Heme-degrading monooxygenase of Halalkalibacterium halodurans (strain ATCC BAA-125 / DSM 18197 / FERM 7344 / JCM 9153 / C-125) (Bacillus halodurans).